Reading from the N-terminus, the 210-residue chain is Outer-membrane lipoprotein LolB (210 aa).

The N-terminal stretch at 1-29 (MSLISNNEERSLRVRYCIAIALSALLISG) is a signal peptide. A lipid anchor (N-palmitoyl cysteine) is attached at Cys-30. Residue Cys-30 is the site of S-diacylglycerol cysteine attachment.

Belongs to the LolB family. In terms of assembly, monomer.

The protein localises to the cell outer membrane. Functionally, plays a critical role in the incorporation of lipoproteins in the outer membrane after they are released by the LolA protein. The sequence is that of Outer-membrane lipoprotein LolB from Coxiella burnetii (strain CbuG_Q212) (Coxiella burnetii (strain Q212)).